Here is a 293-residue protein sequence, read N- to C-terminus: Elongation factor Ts (293 aa).

An involved in Mg(2+) ion dislocation from EF-Tu region spans residues 80 to 83 (TDFV).

This sequence belongs to the EF-Ts family.

The protein localises to the cytoplasm. Associates with the EF-Tu.GDP complex and induces the exchange of GDP to GTP. It remains bound to the aminoacyl-tRNA.EF-Tu.GTP complex up to the GTP hydrolysis stage on the ribosome. In Burkholderia multivorans (strain ATCC 17616 / 249), this protein is Elongation factor Ts.